A 308-amino-acid chain; its full sequence is Aliphatic nitrilase (308 aa).

The 267-residue stretch at Phe-4–Thr-270 folds into the CN hydrolase domain. Glu-44 acts as the Proton acceptor in catalysis. Residue Lys-130 is part of the active site. Cys-164 functions as the Nucleophile in the catalytic mechanism.

This sequence belongs to the carbon-nitrogen hydrolase superfamily. Nitrilase family.

The enzyme catalyses a nitrile + 2 H2O = a carboxylate + NH4(+). Its function is as follows. Nitrilase that hydrolyzes preferentially phenylacetonitrile, but not (R,S)-mandelonitrile. Also acts on dinitriles like phenylenediacetonitriles (PDAs) 1,2-PDA, 1,3-PDA, and 1,4-PDA, and cyanophenyl acetonitriles (CPAs) 2-CPA and 4-CPA, but with lower activities. The sequence is that of Aliphatic nitrilase (nit) from Sinorhizobium fredii (strain HH103).